Here is a 216-residue protein sequence, read N- to C-terminus: Probable transaldolase (216 aa).

Residue Lys84 is the Schiff-base intermediate with substrate of the active site.

This sequence belongs to the transaldolase family. Type 3B subfamily.

The protein localises to the cytoplasm. The enzyme catalyses D-sedoheptulose 7-phosphate + D-glyceraldehyde 3-phosphate = D-erythrose 4-phosphate + beta-D-fructose 6-phosphate. It participates in carbohydrate degradation; pentose phosphate pathway; D-glyceraldehyde 3-phosphate and beta-D-fructose 6-phosphate from D-ribose 5-phosphate and D-xylulose 5-phosphate (non-oxidative stage): step 2/3. Functionally, transaldolase is important for the balance of metabolites in the pentose-phosphate pathway. This is Probable transaldolase from Lysinibacillus sphaericus (strain C3-41).